We begin with the raw amino-acid sequence, 188 residues long: Probable nicotinate-nucleotide adenylyltransferase (188 aa).

Belongs to the NadD family.

It catalyses the reaction nicotinate beta-D-ribonucleotide + ATP + H(+) = deamido-NAD(+) + diphosphate. The protein operates within cofactor biosynthesis; NAD(+) biosynthesis; deamido-NAD(+) from nicotinate D-ribonucleotide: step 1/1. Catalyzes the reversible adenylation of nicotinate mononucleotide (NaMN) to nicotinic acid adenine dinucleotide (NaAD). This is Probable nicotinate-nucleotide adenylyltransferase from Sulfurovum sp. (strain NBC37-1).